Here is a 383-residue protein sequence, read N- to C-terminus: Paralemmin-1 (383 aa).

Met1 bears the N-acetylmethionine mark. A coiled-coil region spans residues 5–102 (ATDTASQQER…KEIDVLEFGE (98 aa)). Disordered stretches follow at residues 51–163 (RERW…GSTM), 242–295 (TLSE…GQEP), and 334–375 (ATPR…MKKP). Residues 69 to 96 (DMRKQMQEDEQKARGLEESITRLEKEID) show a composition bias toward basic and acidic residues. Polar residues-rich tracts occupy residues 109–124 (KENS…QSAS) and 133–143 (ETLVNAQQTPL). 3 positions are modified to phosphoserine: Ser116, Ser122, and Ser124. Residues Thr141, Thr145, and Thr153 each carry the phosphothreonine modification. A phosphoserine mark is found at Ser157 and Ser161. Thr242 carries the post-translational modification Phosphothreonine. Residue Ser244 is modified to Phosphoserine. Residues 257–273 (GLAEDVTRTTPSRREIT) show a composition bias toward basic and acidic residues. The span at 285–295 (GPPGIQPGQEP) shows a compositional bias: low complexity. Ser345 is subject to Phosphoserine. Residues 357 to 367 (QTGPTTTPSDT) are compositionally biased toward polar residues. Phosphothreonine occurs at positions 361, 362, and 363. Position 365 is a phosphoserine (Ser365). Phosphothreonine is present on Thr367. 2 S-palmitoyl cysteine lipidation sites follow: Cys377 and Cys379. Cys380 bears the Cysteine methyl ester mark. Cys380 carries S-farnesyl cysteine lipidation. The propeptide at 381–383 (SVM) is removed in mature form.

Belongs to the paralemmin family. As to quaternary structure, interacts with dopamine receptor DRD3. As to expression, expression is highest in brain, intermediate in adrenal gland and kidney, and much lower or undetectable in other tissues. Isoform 1 is the predominant isoform in most tissues except brain and kidney where isoform 2 predominates.

Its subcellular location is the cell membrane. The protein resides in the cell projection. It localises to the filopodium membrane. The protein localises to the axon. It is found in the dendrite. Its subcellular location is the dendritic spine. The protein resides in the basolateral cell membrane. It localises to the apicolateral cell membrane. In terms of biological role, involved in plasma membrane dynamics and cell process formation. Isoform 1 and isoform 2 are necessary for axonal and dendritic filopodia induction, for dendritic spine maturation and synapse formation in a palmitoylation-dependent manner. In Mus musculus (Mouse), this protein is Paralemmin-1 (Palm).